A 223-amino-acid chain; its full sequence is Voltage-dependent calcium channel gamma-1 subunit (223 aa).

Over 1–10 (MSQTKTAKVR) the chain is Cytoplasmic. The helical transmembrane segment at 11–29 (VTLFFILVGGVLAMVAVVT) threads the bilayer. The Extracellular portion of the chain corresponds to 30-109 (DHWAVLSPHL…TQKEYSISAA (80 aa)). Asn43 and Asn80 each carry an N-linked (GlcNAc...) asparagine glycan. Cys57 and Cys81 are disulfide-bonded. Residues 110-130 (AIAIFSLGFIIVGSICAFLSF) form a helical membrane-spanning segment. Topologically, residues 131-135 (GNKRD) are cytoplasmic. The helical transmembrane segment at 136–156 (YLLRPASMFYAFAGLCLIVSV) threads the bilayer. Residues 157 to 180 (EVMRQSVKRMIDSEDTVWIEHYYS) lie on the Extracellular side of the membrane. A helical transmembrane segment spans residues 181 to 205 (WSFACACAAFILLFLGGLFLLLFSL). Over 206-223 (PRMPQNPWESCMDAEPEH) the chain is Cytoplasmic.

Belongs to the PMP-22/EMP/MP20 family. CACNG subfamily. As to quaternary structure, component of a calcium channel complex consisting of a pore-forming alpha subunit (CACNA1S) and the ancillary subunits CACNB1 or CACNB2, CACNG1 and CACNA2D1. The channel complex contains alpha, beta, gamma and delta subunits in a 1:1:1:1 ratio, i.e. it contains either CACNB1 or CACNB2. N-glycosylated. As to expression, detected in skeletal muscle (at protein level).

The protein resides in the cell membrane. It localises to the sarcolemma. In terms of biological role, regulatory subunit of the voltage-gated calcium channel that gives rise to L-type calcium currents in skeletal muscle. Regulates channel inactivation kinetics. The chain is Voltage-dependent calcium channel gamma-1 subunit (Cacng1) from Mus musculus (Mouse).